The sequence spans 123 residues: U11/U12 small nuclear ribonucleoprotein 25 kDa protein (123 aa).

A Ubiquitin-like domain is found at Met-32–Lys-123.

As to quaternary structure, component of the U11/U12 snRNPs that are part of the U12-type spliceosome.

The protein resides in the nucleus. This chain is U11/U12 small nuclear ribonucleoprotein 25 kDa protein (Snrnp25), found in Mus musculus (Mouse).